Here is a 465-residue protein sequence, read N- to C-terminus: Hexokinase-4 (465 aa).

In terms of domain architecture, Hexokinase spans 10–454 (ATKKEKVEQI…SGRGAALVSA (445 aa)). Residues 67–203 (EGSEVGDFLS…DFEMDVVAMV (137 aa)) form a hexokinase small subdomain region. ATP is bound at residue 78–83 (DLGGTN). Substrate contacts are provided by residues 151-152 (SF), 168-169 (TK), and 204-205 (ND). The segment at 204–443 (NDTVATMISC…CEITFIESEE (240 aa)) is hexokinase large subdomain. ATP is bound at residue Thr228. Substrate is bound by residues Asn231, Glu256, and Glu290. ATP contacts are provided by residues 295 to 296 (GK), 332 to 336 (TRFVS), and 411 to 415 (SVYKL).

Belongs to the hexokinase family. In terms of assembly, monomer. Interacts with MIDN; the interaction occurs preferentially at low glucose levels and results in inhibition of hexokinase activity. Interacts with GCKR; leading to sequestration in the nucleus. In terms of tissue distribution, expression is restricted to the liver and pancreatic islets (at protein level).

The protein localises to the cytoplasm. The protein resides in the nucleus. It is found in the mitochondrion. It catalyses the reaction a D-hexose + ATP = a D-hexose 6-phosphate + ADP + H(+). The enzyme catalyses D-fructose + ATP = D-fructose 6-phosphate + ADP + H(+). It carries out the reaction D-glucose + ATP = D-glucose 6-phosphate + ADP + H(+). The catalysed reaction is D-mannose + ATP = D-mannose 6-phosphate + ADP + H(+). It functions in the pathway carbohydrate metabolism; hexose metabolism. Its pathway is carbohydrate degradation; glycolysis; D-glyceraldehyde 3-phosphate and glycerone phosphate from D-glucose: step 1/4. Its activity is regulated as follows. Subject to allosteric regulation. Low glucose and high fructose-6-phosphate triggers association with the inhibitor GCKR followed by sequestration in the nucleus. Functionally, catalyzes the phosphorylation of hexose, such as D-glucose, D-fructose and D-mannose, to hexose 6-phosphate (D-glucose 6-phosphate, D-fructose 6-phosphate and D-mannose 6-phosphate, respectively). Compared to other hexokinases, has a weak affinity for D-glucose, and is effective only when glucose is abundant. Mainly expressed in pancreatic beta cells and the liver and constitutes a rate-limiting step in glucose metabolism in these tissues. Since insulin secretion parallels glucose metabolism and the low glucose affinity of GCK ensures that it can change its enzymatic activity within the physiological range of glucose concentrations, GCK acts as a glucose sensor in the pancreatic beta cell. In pancreas, plays an important role in modulating insulin secretion. In liver, helps to facilitate the uptake and conversion of glucose by acting as an insulin-sensitive determinant of hepatic glucose usage. Required to provide D-glucose 6-phosphate for the synthesis of glycogen. Mediates the initial step of glycolysis by catalyzing phosphorylation of D-glucose to D-glucose 6-phosphate. In Rattus norvegicus (Rat), this protein is Hexokinase-4.